We begin with the raw amino-acid sequence, 524 residues long: B3 domain-containing protein Os07g0183700 (524 aa).

Disordered stretches follow at residues 94–152 (DGEG…TSVS) and 191–232 (PLQP…FQTQ). Residues 100 to 109 (CAPPPSPIPA) are compositionally biased toward pro residues. Low complexity-rich tracts occupy residues 110–124 (GPAS…SAPA) and 200–232 (AAAA…FQTQ). The TF-B3 DNA-binding region spans 336 to 434 (SFVKPLTYTD…EMFMAVRRTR (99 aa)).

It localises to the nucleus. This is B3 domain-containing protein Os07g0183700 from Oryza sativa subsp. japonica (Rice).